The primary structure comprises 507 residues: Probable DNA ligase (507 aa).

Glu209 contacts ATP. The active-site N6-AMP-lysine intermediate is the Lys211. ATP contacts are provided by Arg216, Arg231, Glu260, Phe300, Arg372, and Lys378.

This sequence belongs to the ATP-dependent DNA ligase family. Mg(2+) is required as a cofactor.

The enzyme catalyses ATP + (deoxyribonucleotide)n-3'-hydroxyl + 5'-phospho-(deoxyribonucleotide)m = (deoxyribonucleotide)n+m + AMP + diphosphate.. Its function is as follows. DNA ligase that seals nicks in double-stranded DNA during DNA replication, DNA recombination and DNA repair. The sequence is that of Probable DNA ligase from Mycobacterium bovis (strain ATCC BAA-935 / AF2122/97).